The primary structure comprises 375 residues: Acetylornithine aminotransferase (375 aa).

Pyridoxal 5'-phosphate is bound by residues 93 to 94 (GT) and Phe-120. A N(2)-acetyl-L-ornithine-binding site is contributed by Arg-123. 205-208 (DEVQ) provides a ligand contact to pyridoxal 5'-phosphate. An N6-(pyridoxal phosphate)lysine modification is found at Lys-234. Thr-262 contacts N(2)-acetyl-L-ornithine. Thr-263 contributes to the pyridoxal 5'-phosphate binding site.

Belongs to the class-III pyridoxal-phosphate-dependent aminotransferase family. ArgD subfamily. As to quaternary structure, homodimer. Pyridoxal 5'-phosphate is required as a cofactor.

The protein localises to the cytoplasm. It catalyses the reaction N(2)-acetyl-L-ornithine + 2-oxoglutarate = N-acetyl-L-glutamate 5-semialdehyde + L-glutamate. The protein operates within amino-acid biosynthesis; L-arginine biosynthesis; N(2)-acetyl-L-ornithine from L-glutamate: step 4/4. This is Acetylornithine aminotransferase from Staphylococcus epidermidis (strain ATCC 12228 / FDA PCI 1200).